Reading from the N-terminus, the 229-residue chain is UPF0758 protein GSU0386 (229 aa).

The region spanning 107–229 is the MPN domain; sequence RFTSPEQVYN…FTSFVSAGLL (123 aa). Residues His-178, His-180, and Asp-191 each contribute to the Zn(2+) site. Positions 178–191 match the JAMM motif motif; the sequence is HNHPTGDPAPSRED.

It belongs to the UPF0758 family.

In Geobacter sulfurreducens (strain ATCC 51573 / DSM 12127 / PCA), this protein is UPF0758 protein GSU0386.